Here is an 84-residue protein sequence, read N- to C-terminus: Small ribosomal subunit protein uS17 (84 aa).

Belongs to the universal ribosomal protein uS17 family. Part of the 30S ribosomal subunit.

Its function is as follows. One of the primary rRNA binding proteins, it binds specifically to the 5'-end of 16S ribosomal RNA. The polypeptide is Small ribosomal subunit protein uS17 (Clostridium beijerinckii (strain ATCC 51743 / NCIMB 8052) (Clostridium acetobutylicum)).